An 89-amino-acid polypeptide reads, in one-letter code: Cornifin-A (89 aa).

The tract at residues 1–29 is disordered; it reads MNSQQQKQPCTPPPQPQQQQVKQPCQPPP. 8 consecutive repeat copies span residues 3 to 14, 18 to 29, 31 to 38, 39 to 46, 47 to 54, 55 to 62, 63 to 70, and 71 to 78. The tract at residues 3–29 is 2 X 12 AA approximate repeats; the sequence is SQQQKQPCTPPPQPQQQQVKQPCQPPP. A 6 X 8 AA approximate tandem repeats region spans residues 31 to 78; that stretch reads EPCIPKTKEPCHPKVPEPCHPKVPEPCQPKVPEPCQPKVPEPCPSTVT. The tract at residues 68–89 is disordered; that stretch reads KVPEPCPSTVTPAPAQQKTKQK. The span at 75 to 89 shows a compositional bias: polar residues; sequence STVTPAPAQQKTKQK.

The protein belongs to the cornifin (SPRR) family.

It is found in the cytoplasm. Its function is as follows. Cross-linked envelope protein of keratinocytes. It is a keratinocyte protein that first appears in the cell cytosol, but ultimately becomes cross-linked to membrane proteins by transglutaminase. All that results in the formation of an insoluble envelope beneath the plasma membrane. In Homo sapiens (Human), this protein is Cornifin-A (SPRR1A).